The chain runs to 64 residues: Small ribosomal subunit protein bS21 (64 aa).

Positions 26–64 are disordered; that stretch reads DGILSEARRRTRFERPPTRRKRKDAAKRRLAIKAARKAT. Over residues 43–64 the composition is skewed to basic residues; that stretch reads TRRKRKDAAKRRLAIKAARKAT.

It belongs to the bacterial ribosomal protein bS21 family.

The polypeptide is Small ribosomal subunit protein bS21 (Dehalococcoides mccartyi (strain ATCC BAA-2100 / JCM 16839 / KCTC 5957 / BAV1)).